A 103-amino-acid polypeptide reads, in one-letter code: Protein IQ-DOMAIN 20 (103 aa).

The calmodulin-binding stretch occupies residues 10-22; the sequence is VVRRKLLRRSQSR. 2 consecutive IQ domains span residues 36 to 62 and 63 to 87; these read EEIA…LKSL and VKLQ…CMHA.

It belongs to the IQD family. In terms of assembly, interacts with calmodulin (CaM and CML) at the plasma membrane in a calcium ion Ca(2+)- independent manner, however, Ca(2+) seems to modulate calmodulin binding. Binds to multiple calmodulin (CaM) in the presence of Ca(2+) and CaM-like proteins.

It localises to the nucleus. Its subcellular location is the nucleolus. The protein resides in the cell membrane. Functionally, may be involved in cooperative interactions with calmodulins or calmodulin-like proteins. Recruits calmodulin proteins to microtubules, thus being a potential scaffold in cellular signaling and trafficking. May associate with nucleic acids and regulate gene expression at the transcriptional or post-transcriptional level. In Arabidopsis thaliana (Mouse-ear cress), this protein is Protein IQ-DOMAIN 20.